The following is a 180-amino-acid chain: Large ribosomal subunit protein uL5 (180 aa).

Belongs to the universal ribosomal protein uL5 family. Part of the 50S ribosomal subunit; part of the 5S rRNA/L5/L18/L25 subcomplex. Contacts the 5S rRNA and the P site tRNA. Forms a bridge to the 30S subunit in the 70S ribosome.

Its function is as follows. This is one of the proteins that bind and probably mediate the attachment of the 5S RNA into the large ribosomal subunit, where it forms part of the central protuberance. In the 70S ribosome it contacts protein S13 of the 30S subunit (bridge B1b), connecting the 2 subunits; this bridge is implicated in subunit movement. Contacts the P site tRNA; the 5S rRNA and some of its associated proteins might help stabilize positioning of ribosome-bound tRNAs. The sequence is that of Large ribosomal subunit protein uL5 from Brevibacillus brevis (strain 47 / JCM 6285 / NBRC 100599).